A 109-amino-acid polypeptide reads, in one-letter code: Putative double-stranded DNA mimic protein Ent638_2296 (109 aa).

This sequence belongs to the putative dsDNA mimic protein family.

In terms of biological role, may act as a double-stranded DNA (dsDNA) mimic. Probably regulates the activity of a dsDNA-binding protein. The polypeptide is Putative double-stranded DNA mimic protein Ent638_2296 (Enterobacter sp. (strain 638)).